The chain runs to 154 residues: Putative pre-16S rRNA nuclease (154 aa).

Belongs to the YqgF nuclease family.

The protein resides in the cytoplasm. Its function is as follows. Could be a nuclease involved in processing of the 5'-end of pre-16S rRNA. The sequence is that of Putative pre-16S rRNA nuclease from Rickettsia conorii (strain ATCC VR-613 / Malish 7).